A 567-amino-acid polypeptide reads, in one-letter code: Phosphoglucomutase-like protein 5 (567 aa).

The tract at residues 1–26 (MEGSPIPVLTVPTAPYEDQRPTGGGG) is disordered. Thr-120 is modified (phosphothreonine). Residue Ser-122 is modified to Phosphoserine.

It belongs to the phosphohexose mutase family. Interacts with DMD/dystrophin; the interaction is direct. Interacts with UTRN/utrophin.

It is found in the cell junction. It localises to the adherens junction. The protein localises to the cytoplasm. The protein resides in the cytoskeleton. Its subcellular location is the cell membrane. It is found in the sarcolemma. In terms of biological role, component of adherens-type cell-cell and cell-matrix junctions. Has no phosphoglucomutase activity in vitro. The protein is Phosphoglucomutase-like protein 5 of Mus musculus (Mouse).